The chain runs to 101 residues: Ribonuclease kappa-B (101 aa).

2 consecutive transmembrane segments (helical) span residues 13–33 (ACGI…GVFF) and 68–88 (VSYN…FSFC).

Belongs to the RNase K family.

The protein resides in the membrane. Functionally, endoribonuclease which preferentially cleaves ApU and ApG phosphodiester bonds. In Xenopus laevis (African clawed frog), this protein is Ribonuclease kappa-B (rnasek-b).